A 103-amino-acid polypeptide reads, in one-letter code: Large ribosomal subunit protein bL21 (103 aa).

Belongs to the bacterial ribosomal protein bL21 family. As to quaternary structure, part of the 50S ribosomal subunit. Contacts protein L20.

Its function is as follows. This protein binds to 23S rRNA in the presence of protein L20. This chain is Large ribosomal subunit protein bL21, found in Aeromonas hydrophila subsp. hydrophila (strain ATCC 7966 / DSM 30187 / BCRC 13018 / CCUG 14551 / JCM 1027 / KCTC 2358 / NCIMB 9240 / NCTC 8049).